The following is a 133-amino-acid chain: Lymphocyte antigen 6 complex locus protein G6d (133 aa).

The signal sequence occupies residues Met1–Gly19. The UPAR/Ly6 domain maps to Met22–Leu116. A disulfide bond links Cys27 and Cys35. 2 O-linked (GalNAc...) threonine glycosylation sites follow: Thr40 and Thr41. 2 cysteine pairs are disulfide-bonded: Cys42–Cys71 and Cys77–Cys96. A lipid anchor (GPI-anchor amidated serine) is attached at Ser104. A propeptide spans Ala105–Gly133 (removed in mature form).

As to quaternary structure, homodimer. O-glycosylated. Expressed in the adult lung, and in fetal liver, lung, kidney, brain and spleen.

It localises to the cell membrane. The protein localises to the cell projection. Its subcellular location is the filopodium. The chain is Lymphocyte antigen 6 complex locus protein G6d (LY6G6D) from Homo sapiens (Human).